A 191-amino-acid chain; its full sequence is Guanylate kinase (191 aa).

The Guanylate kinase-like domain occupies 10–188; that stretch reads GQLIVLTGPS…ALHRLVKLIG (179 aa). 17–24 is a binding site for ATP; that stretch reads GPSGVGKG.

This sequence belongs to the guanylate kinase family.

The protein resides in the cytoplasm. The catalysed reaction is GMP + ATP = GDP + ADP. Functionally, essential for recycling GMP and indirectly, cGMP. This chain is Guanylate kinase (gmk), found in Synechocystis sp. (strain ATCC 27184 / PCC 6803 / Kazusa).